Reading from the N-terminus, the 115-residue chain is Nucleoid-associated protein alr5067 (115 aa).

The protein belongs to the YbaB/EbfC family. In terms of assembly, homodimer.

It localises to the cytoplasm. It is found in the nucleoid. In terms of biological role, binds to DNA and alters its conformation. May be involved in regulation of gene expression, nucleoid organization and DNA protection. The polypeptide is Nucleoid-associated protein alr5067 (Nostoc sp. (strain PCC 7120 / SAG 25.82 / UTEX 2576)).